We begin with the raw amino-acid sequence, 522 residues long: Maturase K (522 aa).

It belongs to the intron maturase 2 family. MatK subfamily.

It localises to the plastid. Its subcellular location is the chloroplast. Functionally, usually encoded in the trnK tRNA gene intron. Probably assists in splicing its own and other chloroplast group II introns. In Gladiolus papilio (Goldblotch gladiolus), this protein is Maturase K.